A 278-amino-acid chain; its full sequence is Large ribosomal subunit protein uL2 (278 aa).

Disordered stretches follow at residues 1–59 (MAIR…GGHK) and 222–278 (RGAA…NKKR). A compositionally biased stretch (polar residues) spans 16–27 (SSVSEFSEITRS). Composition is skewed to basic residues over residues 45–59 (VHGH…GGHK) and 269–278 (VRRRRPNKKR).

This sequence belongs to the universal ribosomal protein uL2 family. Part of the 50S ribosomal subunit. Forms a bridge to the 30S subunit in the 70S ribosome.

Functionally, one of the primary rRNA binding proteins. Required for association of the 30S and 50S subunits to form the 70S ribosome, for tRNA binding and peptide bond formation. It has been suggested to have peptidyltransferase activity; this is somewhat controversial. Makes several contacts with the 16S rRNA in the 70S ribosome. This Corynebacterium urealyticum (strain ATCC 43042 / DSM 7109) protein is Large ribosomal subunit protein uL2.